Here is a 292-residue protein sequence, read N- to C-terminus: Phosphatidylglycerol--prolipoprotein diacylglyceryl transferase (292 aa).

3 consecutive transmembrane segments (helical) span residues 18-38, 67-87, and 105-125; these read LFGV…GLLI, LLTW…VLFY, and GGMS…AFCL. R150 serves as a coordination point for a 1,2-diacyl-sn-glycero-3-phospho-(1'-sn-glycerol). The next 3 helical transmembrane spans lie at 193-213, 222-242, and 266-286; these read QIYE…LLVW, GSVS…VEFV, and GLTM…YLIL.

The protein belongs to the Lgt family.

The protein resides in the cell inner membrane. It carries out the reaction L-cysteinyl-[prolipoprotein] + a 1,2-diacyl-sn-glycero-3-phospho-(1'-sn-glycerol) = an S-1,2-diacyl-sn-glyceryl-L-cysteinyl-[prolipoprotein] + sn-glycerol 1-phosphate + H(+). The protein operates within protein modification; lipoprotein biosynthesis (diacylglyceryl transfer). Its function is as follows. Catalyzes the transfer of the diacylglyceryl group from phosphatidylglycerol to the sulfhydryl group of the N-terminal cysteine of a prolipoprotein, the first step in the formation of mature lipoproteins. In Cereibacter sphaeroides (strain ATCC 17029 / ATH 2.4.9) (Rhodobacter sphaeroides), this protein is Phosphatidylglycerol--prolipoprotein diacylglyceryl transferase.